Consider the following 69-residue polypeptide: uncharacterized protein (69 aa).

2 helical membrane-spanning segments follow: residues 15-35 (LIIG…ICYV) and 36-56 (LYII…IPKT).

The protein resides in the cell membrane. This is an uncharacterized protein from Methanocaldococcus jannaschii (strain ATCC 43067 / DSM 2661 / JAL-1 / JCM 10045 / NBRC 100440) (Methanococcus jannaschii).